Here is a 420-residue protein sequence, read N- to C-terminus: uncharacterized protein (420 aa).

This sequence belongs to the mimivirus R160 family.

The protein resides in the virion. This is an uncharacterized protein from Acanthamoeba polyphaga mimivirus (APMV).